The following is a 631-amino-acid chain: Glutamine--fructose-6-phosphate aminotransferase [isomerizing] (631 aa).

Cys-2 (nucleophile; for GATase activity) is an active-site residue. The 224-residue stretch at 2–225 (CGIVGYIGTQ…NGEIARLTPL (224 aa)) folds into the Glutamine amidotransferase type-2 domain. SIS domains follow at residues 298-446 (LDPQ…QRHS) and 480-621 (LAHE…VDQP). The For Fru-6P isomerization activity role is filled by Lys-626.

Homodimer.

It localises to the cytoplasm. The enzyme catalyses D-fructose 6-phosphate + L-glutamine = D-glucosamine 6-phosphate + L-glutamate. In terms of biological role, catalyzes the first step in hexosamine metabolism, converting fructose-6P into glucosamine-6P using glutamine as a nitrogen source. The protein is Glutamine--fructose-6-phosphate aminotransferase [isomerizing] of Synechocystis sp. (strain ATCC 27184 / PCC 6803 / Kazusa).